The chain runs to 60 residues: Small integral membrane protein 3 (60 aa).

The helical transmembrane segment at Ile20–Cys40 threads the bilayer.

The protein resides in the membrane. The sequence is that of Small integral membrane protein 3 (Smim3) from Rattus norvegicus (Rat).